The chain runs to 176 residues: Cytochrome b (176 aa).

The next 3 helical transmembrane spans lie at 33–53 (FGSLLGVCLIVQILTGLFLAM), 77–98 (WLLRYLHANGASMFFICLYLHI), and 113–133 (WNVGVILLFAVMATAFMGYVL). Positions 83 and 97 each coordinate heme b.

It belongs to the cytochrome b family. In terms of assembly, the cytochrome bc1 complex contains 11 subunits: 3 respiratory subunits (MT-CYB, CYC1 and UQCRFS1), 2 core proteins (UQCRC1 and UQCRC2) and 6 low-molecular weight proteins (UQCRH/QCR6, UQCRB/QCR7, UQCRQ/QCR8, UQCR10/QCR9, UQCR11/QCR10 and a cleavage product of UQCRFS1). This cytochrome bc1 complex then forms a dimer. Requires heme b as cofactor.

It is found in the mitochondrion inner membrane. Component of the ubiquinol-cytochrome c reductase complex (complex III or cytochrome b-c1 complex) that is part of the mitochondrial respiratory chain. The b-c1 complex mediates electron transfer from ubiquinol to cytochrome c. Contributes to the generation of a proton gradient across the mitochondrial membrane that is then used for ATP synthesis. The protein is Cytochrome b (MT-CYB) of Nyctinomops aurispinosus (Peale's free-tailed bat).